Here is a 663-residue protein sequence, read N- to C-terminus: MFDWEEEELTNMIWGDDAETGDHIVPFKVRSEQLNKKEQIEESKTAEQKITGTKIDLHDKNLGSSSSHNVDEGLPQPDFCMSSWPDTSLTNATKVDQDLSATELSKCLAEPVRYDSTRGGAFLLKQSCFTWVRSFQSNHFKSCVLTLFLPEKTSELGKGPDIFHSSDESKEQGDFDDYSWANIGSFDDLDRMFSDGFAAMMSLYLVMAVSAVVMSYGHLLKITEFEQQENQQFPLTGKANGLSSQSVPSVRVTLKADQYREHKGQPSVEDQPYQQNKMMKFSKMPGTSEARPFQELYGQRIPFSNSAGKCVNQLAPPQSSLMAVNLLSESEGSGTSHYSHMPNQYMANSAFGNLANPYSSVPVISAVQHPDVRNQLMHPSYNPATATSVNMATDASARPSTMTPQEKLEKLRRRQQMQAMLAIQRQQQQFSHQVPVADQSITQNCLQDIPLQLVDKTNLQGLTAMPSFDPSSSLEQDDSGKFAAAVDNSAEFAVLYRLQDVVAKLDMGTRTCIRDSLFRLAGSAAQRHYTSDTSHSNKTSQDDQEVIPREESRYRYAGMPDTEAVTNPTDRTVAHLLFHRPFDMLAAKRMEGPESPASSKMGTEEKGNFPKCSIRETHLTKQKAQKEEGPADSLALGNAPNSGSSSTVGERVVEASQGNKRKL.

Disordered stretches follow at residues 528–549 and 590–663; these read HYTS…VIPR and MEGP…KRKL. Basic and acidic residues predominate over residues 602–629; the sequence is GTEEKGNFPKCSIRETHLTKQKAQKEEG. The span at 639-648 shows a compositional bias: polar residues; that stretch reads APNSGSSSTV.

Interacts with CCA1, LHY, REV4 and REV8, but not with PRR7 or PRR9. As to expression, expressed in roots, stems, leaves, seedlings, cotyledons, inflorescences and siliques. Highest expression in root tips, young leaves and vasculatur tissues.

The protein resides in the nucleus. Its function is as follows. Transcriptional coactivator necessary for expression of the clock genes PRR5 and TOC1. Antagonizes REV8 function in the regulation of anthocyanin accumulation. Involved in red light input to the clock. Activates clock-controlled genes with afternoon peak. Mediates light inhibition of hypocotyl elongation. Unable to bind to DNA, but recruited to the evening element (EE)-containing region of the PRR5 and TOC1 promoters through its interaction with the DNA binding proteins REV8 and REV4. The sequence is that of Protein LNK2 from Arabidopsis thaliana (Mouse-ear cress).